The sequence spans 412 residues: Alanyl-tRNA editing protein Aarsd1 (412 aa).

Zn(2+) contacts are provided by histidine 109 and histidine 113. Serine 174 bears the Phosphoserine mark. The Zn(2+) site is built by cysteine 209 and histidine 213.

It belongs to the class-II aminoacyl-tRNA synthetase family. Alax-L subfamily. Zn(2+) is required as a cofactor.

The protein localises to the cytoplasm. Its function is as follows. Functions in trans to edit the amino acid moiety from incorrectly charged tRNA(Ala). This is Alanyl-tRNA editing protein Aarsd1 (Aarsd1) from Rattus norvegicus (Rat).